The following is a 317-amino-acid chain: Transaldolase (317 aa).

K126 (schiff-base intermediate with substrate) is an active-site residue.

The protein belongs to the transaldolase family. Type 1 subfamily. Homodimer.

The protein localises to the cytoplasm. The enzyme catalyses D-sedoheptulose 7-phosphate + D-glyceraldehyde 3-phosphate = D-erythrose 4-phosphate + beta-D-fructose 6-phosphate. The protein operates within carbohydrate degradation; pentose phosphate pathway; D-glyceraldehyde 3-phosphate and beta-D-fructose 6-phosphate from D-ribose 5-phosphate and D-xylulose 5-phosphate (non-oxidative stage): step 2/3. Transaldolase is important for the balance of metabolites in the pentose-phosphate pathway. This is Transaldolase from Burkholderia thailandensis (strain ATCC 700388 / DSM 13276 / CCUG 48851 / CIP 106301 / E264).